The primary structure comprises 136 residues: Large ribosomal subunit protein uL16c (136 aa).

It belongs to the universal ribosomal protein uL16 family. As to quaternary structure, part of the 50S ribosomal subunit.

It is found in the plastid. The protein resides in the chloroplast. This Illicium oligandrum (Star anise) protein is Large ribosomal subunit protein uL16c.